Reading from the N-terminus, the 526-residue chain is Light-independent protochlorophyllide reductase subunit B (526 aa).

Residue Asp-36 participates in [4Fe-4S] cluster binding. Asp-290 serves as the catalytic Proton donor. 425 to 426 serves as a coordination point for substrate; that stretch reads GL.

Belongs to the ChlB/BchB/BchZ family. Protochlorophyllide reductase is composed of three subunits; ChlL, ChlN and ChlB. Forms a heterotetramer of two ChlB and two ChlN subunits. It depends on [4Fe-4S] cluster as a cofactor.

The enzyme catalyses chlorophyllide a + oxidized 2[4Fe-4S]-[ferredoxin] + 2 ADP + 2 phosphate = protochlorophyllide a + reduced 2[4Fe-4S]-[ferredoxin] + 2 ATP + 2 H2O. It functions in the pathway porphyrin-containing compound metabolism; chlorophyll biosynthesis (light-independent). In terms of biological role, component of the dark-operative protochlorophyllide reductase (DPOR) that uses Mg-ATP and reduced ferredoxin to reduce ring D of protochlorophyllide (Pchlide) to form chlorophyllide a (Chlide). This reaction is light-independent. The NB-protein (ChlN-ChlB) is the catalytic component of the complex. The chain is Light-independent protochlorophyllide reductase subunit B from Prochlorococcus marinus subsp. pastoris (strain CCMP1986 / NIES-2087 / MED4).